A 502-amino-acid polypeptide reads, in one-letter code: Cytochrome P450 3A5 (502 aa).

Cysteine 441 provides a ligand contact to heme.

Belongs to the cytochrome P450 family. Heme serves as cofactor.

It is found in the endoplasmic reticulum membrane. It localises to the microsome membrane. The enzyme catalyses an organic molecule + reduced [NADPH--hemoprotein reductase] + O2 = an alcohol + oxidized [NADPH--hemoprotein reductase] + H2O + H(+). The catalysed reaction is 17beta-estradiol + reduced [NADPH--hemoprotein reductase] + O2 = 2-hydroxy-17beta-estradiol + oxidized [NADPH--hemoprotein reductase] + H2O + H(+). It catalyses the reaction 17beta-estradiol + reduced [NADPH--hemoprotein reductase] + O2 = 4-hydroxy-17beta-estradiol + oxidized [NADPH--hemoprotein reductase] + H2O + H(+). It carries out the reaction estrone + reduced [NADPH--hemoprotein reductase] + O2 = 2-hydroxyestrone + oxidized [NADPH--hemoprotein reductase] + H2O + H(+). The enzyme catalyses estrone + reduced [NADPH--hemoprotein reductase] + O2 = 4-hydroxyestrone + oxidized [NADPH--hemoprotein reductase] + H2O + H(+). The catalysed reaction is testosterone + reduced [NADPH--hemoprotein reductase] + O2 = 6beta,17beta-dihydroxyandrost-4-en-3-one + oxidized [NADPH--hemoprotein reductase] + H2O + H(+). It catalyses the reaction androst-4-ene-3,17-dione + reduced [NADPH--hemoprotein reductase] + O2 = 6beta-hydroxyandrost-4-ene-3,17-dione + oxidized [NADPH--hemoprotein reductase] + H2O + H(+). It carries out the reaction progesterone + reduced [NADPH--hemoprotein reductase] + O2 = 6beta-hydroxyprogesterone + oxidized [NADPH--hemoprotein reductase] + H2O + H(+). The enzyme catalyses all-trans-retinol + reduced [NADPH--hemoprotein reductase] + O2 = all-trans-retinal + oxidized [NADPH--hemoprotein reductase] + 2 H2O + H(+). The catalysed reaction is all-trans-retinoate + reduced [NADPH--hemoprotein reductase] + O2 = all-trans-4-hydroxyretinoate + oxidized [NADPH--hemoprotein reductase] + H2O + H(+). It functions in the pathway steroid hormone biosynthesis. Its pathway is cofactor metabolism; retinol metabolism. A cytochrome P450 monooxygenase involved in the metabolism of steroid hormones and vitamins. Mechanistically, uses molecular oxygen inserting one oxygen atom into a substrate, and reducing the second into a water molecule, with two electrons provided by NADPH via cytochrome P450 reductase (NADPH--hemoprotein reductase). Catalyzes the hydroxylation of carbon-hydrogen bonds. Exhibits high catalytic activity for the formation of catechol estrogens from 17beta-estradiol (E2) and estrone (E1), namely 2-hydroxy E1 and E2. Catalyzes 6beta-hydroxylation of the steroid hormones testosterone, progesterone, and androstenedione. Catalyzes the oxidative conversion of all-trans-retinol to all-trans-retinal, a rate-limiting step for the biosynthesis of all-trans-retinoic acid (atRA). Further metabolizes all trans-retinoic acid (atRA) to 4-hydroxyretinoate and may play a role in hepatic atRA clearance. Also involved in the oxidative metabolism of xenobiotics, including calcium channel blocking drug nifedipine and immunosuppressive drug cyclosporine. The protein is Cytochrome P450 3A5 of Homo sapiens (Human).